The sequence spans 200 residues: Dephospho-CoA kinase (200 aa).

Positions 4 to 200 (VIGLTGGIGS…QKYIKMSHLY (197 aa)) constitute a DPCK domain. 12–17 (GSGKTT) provides a ligand contact to ATP.

Belongs to the CoaE family.

It is found in the cytoplasm. It catalyses the reaction 3'-dephospho-CoA + ATP = ADP + CoA + H(+). It functions in the pathway cofactor biosynthesis; coenzyme A biosynthesis; CoA from (R)-pantothenate: step 5/5. Functionally, catalyzes the phosphorylation of the 3'-hydroxyl group of dephosphocoenzyme A to form coenzyme A. The sequence is that of Dephospho-CoA kinase from Photobacterium profundum (strain SS9).